A 337-amino-acid chain; its full sequence is tRNA N6-adenosine threonylcarbamoyltransferase (337 aa).

Fe cation-binding residues include histidine 114 and histidine 118. Residues 136 to 140, aspartate 169, glycine 182, aspartate 186, and asparagine 275 contribute to the substrate site; that span reads LVSGG. Residue aspartate 301 coordinates Fe cation.

This sequence belongs to the KAE1 / TsaD family. It depends on Fe(2+) as a cofactor.

It is found in the cytoplasm. It catalyses the reaction L-threonylcarbamoyladenylate + adenosine(37) in tRNA = N(6)-L-threonylcarbamoyladenosine(37) in tRNA + AMP + H(+). Functionally, required for the formation of a threonylcarbamoyl group on adenosine at position 37 (t(6)A37) in tRNAs that read codons beginning with adenine. Is involved in the transfer of the threonylcarbamoyl moiety of threonylcarbamoyl-AMP (TC-AMP) to the N6 group of A37, together with TsaE and TsaB. TsaD likely plays a direct catalytic role in this reaction. The protein is tRNA N6-adenosine threonylcarbamoyltransferase of Streptococcus uberis (strain ATCC BAA-854 / 0140J).